A 919-amino-acid chain; its full sequence is Valine--tRNA ligase (919 aa).

The 'HIGH' region motif lies at 66 to 76 (PNVTGQLHMGH). Residues 562-566 (KMSKS) carry the 'KMSKS' region motif. Position 565 (K565) interacts with ATP. A coiled-coil region spans residues 852 to 919 (TVDKEAERKR…RISARLEELK (68 aa)).

Belongs to the class-I aminoacyl-tRNA synthetase family. ValS type 1 subfamily. As to quaternary structure, monomer.

It is found in the cytoplasm. It catalyses the reaction tRNA(Val) + L-valine + ATP = L-valyl-tRNA(Val) + AMP + diphosphate. Its function is as follows. Catalyzes the attachment of valine to tRNA(Val). As ValRS can inadvertently accommodate and process structurally similar amino acids such as threonine, to avoid such errors, it has a 'posttransfer' editing activity that hydrolyzes mischarged Thr-tRNA(Val) in a tRNA-dependent manner. The chain is Valine--tRNA ligase from Corynebacterium diphtheriae (strain ATCC 700971 / NCTC 13129 / Biotype gravis).